The sequence spans 299 residues: Oxygen-dependent coproporphyrinogen-III oxidase (299 aa).

Residue serine 92 coordinates substrate. Positions 96 and 106 each coordinate a divalent metal cation. The Proton donor role is filled by histidine 106. 108–110 (NVR) is a substrate binding site. The a divalent metal cation site is built by histidine 145 and histidine 175. The interval 240–275 (YVEFNLVWDRGTLFGLQTGGRTESILMSMPPLVRWE) is important for dimerization. 258–260 (GGR) lines the substrate pocket.

It belongs to the aerobic coproporphyrinogen-III oxidase family. In terms of assembly, homodimer. It depends on a divalent metal cation as a cofactor.

It is found in the cytoplasm. It carries out the reaction coproporphyrinogen III + O2 + 2 H(+) = protoporphyrinogen IX + 2 CO2 + 2 H2O. It functions in the pathway porphyrin-containing compound metabolism; protoporphyrin-IX biosynthesis; protoporphyrinogen-IX from coproporphyrinogen-III (O2 route): step 1/1. Involved in the heme biosynthesis. Catalyzes the aerobic oxidative decarboxylation of propionate groups of rings A and B of coproporphyrinogen-III to yield the vinyl groups in protoporphyrinogen-IX. The protein is Oxygen-dependent coproporphyrinogen-III oxidase of Salmonella schwarzengrund (strain CVM19633).